We begin with the raw amino-acid sequence, 376 residues long: D-alanine--D-alanine ligase (376 aa).

The ATP-grasp domain maps to 153–366; it reads KLLLAGQGLP…YPELVHRLIQ (214 aa). ATP is bound at residue 185–240; sequence VEALGYPVFVKPARAGSSIGITRVTSREGLAAAVAEAVSHDPKVVVEAALVGREIE. Positions 317, 333, and 335 each coordinate Mg(2+).

This sequence belongs to the D-alanine--D-alanine ligase family. Mg(2+) is required as a cofactor. Mn(2+) serves as cofactor.

It is found in the cytoplasm. It carries out the reaction 2 D-alanine + ATP = D-alanyl-D-alanine + ADP + phosphate + H(+). It functions in the pathway cell wall biogenesis; peptidoglycan biosynthesis. In terms of biological role, cell wall formation. This is D-alanine--D-alanine ligase from Kineococcus radiotolerans (strain ATCC BAA-149 / DSM 14245 / SRS30216).